We begin with the raw amino-acid sequence, 357 residues long: tRNA pseudouridine synthase Pus10 (357 aa).

The THUMP domain occupies 1 to 118; the sequence is MNLCRECYGI…TFTFELQIRP (118 aa). Catalysis depends on Asp-187, which acts as the Nucleophile. Tyr-251 and Tyr-322 together coordinate substrate.

Belongs to the pseudouridine synthase Pus10 family.

The enzyme catalyses uridine(54) in tRNA = pseudouridine(54) in tRNA. The catalysed reaction is uridine(55) in tRNA = pseudouridine(55) in tRNA. Responsible for synthesis of pseudouridine from uracil-54 and uracil-55 in the psi GC loop of transfer RNAs. The chain is tRNA pseudouridine synthase Pus10 from Archaeoglobus fulgidus (strain ATCC 49558 / DSM 4304 / JCM 9628 / NBRC 100126 / VC-16).